A 359-amino-acid chain; its full sequence is Cinnamyl alcohol dehydrogenase 8 (359 aa).

Residue Cys46 coordinates Zn(2+). NADP(+) is bound at residue Ser48. Zn(2+) is bound by residues His68, Glu69, Cys99, Cys102, Cys105, Cys113, and Cys162. NADP(+) contacts are provided by residues Thr166, 187-192 (GLGGLG), 210-215 (STSEKK), Thr250, Gly274, and 297-299 (SMI).

Belongs to the zinc-containing alcohol dehydrogenase family. In terms of assembly, homodimer. The cofactor is Zn(2+). Expressed in the differentiation and elongation zones of primary and lateral roots. Expressed in the hypocotyl, cotyledon veins, vasculature of the first rosette leaves, hydathodes and trichomes. In stems, expressed in the vascular cambium and developing xylem tissues. Expressed in the style, anthers, stamen filaments, stigmatic regions in flowers, and abscission and style regions of siliques.

It catalyses the reaction (E)-cinnamyl alcohol + NADP(+) = (E)-cinnamaldehyde + NADPH + H(+). Its pathway is aromatic compound metabolism; phenylpropanoid biosynthesis. Its function is as follows. Involved in lignin biosynthesis. Catalyzes the final step specific for the production of lignin monomers. Catalyzes the NADPH-dependent reduction of coniferaldehyde, 5-hydroxyconiferaldehyde, sinapaldehyde, 4-coumaraldehyde and caffeyl aldehyde to their respective alcohols. This chain is Cinnamyl alcohol dehydrogenase 8 (CAD8), found in Arabidopsis thaliana (Mouse-ear cress).